The sequence spans 121 residues: Large ribosomal subunit protein uL18 (121 aa).

This sequence belongs to the universal ribosomal protein uL18 family. Part of the 50S ribosomal subunit; part of the 5S rRNA/L5/L18/L25 subcomplex. Contacts the 5S and 23S rRNAs.

This is one of the proteins that bind and probably mediate the attachment of the 5S RNA into the large ribosomal subunit, where it forms part of the central protuberance. The polypeptide is Large ribosomal subunit protein uL18 (Ehrlichia chaffeensis (strain ATCC CRL-10679 / Arkansas)).